The chain runs to 245 residues: Dehydrogenase/reductase SDR family member 6 (245 aa).

Residues 16 to 18, Asp-37, and Asp-58 each bind NAD(+); that span reads QGI. Arg-144 provides a ligand contact to substrate. The active-site Proton acceptor is Tyr-147. Residues Lys-151 and 180 to 184 each bind NAD(+); that span reads VDTPS. Arg-188 and Arg-205 together coordinate substrate.

The protein belongs to the short-chain dehydrogenases/reductases (SDR) family. Homotetramer.

It is found in the cytoplasm. The enzyme catalyses cis-4-hydroxy-L-proline + NAD(+) = 4-oxo-L-proline + NADH + H(+). The catalysed reaction is (R)-3-hydroxybutanoate + NAD(+) = acetoacetate + NADH + H(+). It functions in the pathway amino-acid metabolism. It participates in siderophore biosynthesis. Functionally, NAD(H)-dependent dehydrogenase/reductase with a preference for cyclic substrates. Catalyzes stereoselective conversion of 4-oxo-L-proline to cis-4-hydroxy-L-proline, likely a detoxification mechanism for ketoprolines. Mediates the formation of 2,5-dihydroxybenzoate (2,5-DHBA), a siderophore that chelates free cytoplasmic iron and associates with LCN2, thereby regulating iron transport and homeostasis while protecting cells against free radical-induced oxidative stress. The iron-siderophore complex is imported into mitochondria, providing an iron source for mitochondrial metabolic processes in particular heme synthesis. May act as a 3-hydroxybutyrate dehydrogenase. This is Dehydrogenase/reductase SDR family member 6 (BDH2) from Bos taurus (Bovine).